Consider the following 353-residue polypeptide: Putrescine N-methyltransferase 2 (353 aa).

The tract at residues 15-50 is disordered; it reads KSGAIPMNGHHNGTSKHQNGHKNGTSEQQNGTISLD. The span at 25 to 50 shows a compositional bias: polar residues; that stretch reads HNGTSKHQNGHKNGTSEQQNGTISLD. Residues 64 to 301 enclose the PABS domain; the sequence is PGWFSEFSAL…GVIGYMLCST (238 aa). S-adenosyl-L-methionine contacts are provided by residues Q95, E170, and 201 to 202; that span reads DG. D220 functions as the Proton acceptor in the catalytic mechanism. S-adenosyl-L-methionine is bound at residue Y289.

It belongs to the class I-like SAM-binding methyltransferase superfamily. Putrescine methyltransferase family. In terms of tissue distribution, predominantly expressed in roots.

The catalysed reaction is putrescine + S-adenosyl-L-methionine = N-methylputrescine + S-adenosyl-L-homocysteine + H(+). The protein operates within alkaloid biosynthesis; nicotine biosynthesis. Its function is as follows. Involved in the biosynthesis of pyridine alkaloid natural products, leading mainly to the production of anabasine, anatabine, nicotine and nornicotine, effective deterrents against herbivores with antiparasitic and pesticide properties (neurotoxins); nornicotine serves as the precursor in the synthesis of the carcinogen compound N'-nitrosonornicotine (NNN). Methyltransferase that mediates the conversion of putrescine to N-methylputrescine. Promotes leaves ripening. The sequence is that of Putrescine N-methyltransferase 2 from Nicotiana tabacum (Common tobacco).